A 161-amino-acid chain; its full sequence is Cell division protein SepF (161 aa).

The protein belongs to the SepF family. As to quaternary structure, homodimer. Interacts with FtsZ.

Its subcellular location is the cytoplasm. Its function is as follows. Cell division protein that is part of the divisome complex and is recruited early to the Z-ring. Probably stimulates Z-ring formation, perhaps through the cross-linking of FtsZ protofilaments. Its function overlaps with FtsA. The polypeptide is Cell division protein SepF (Finegoldia magna (strain ATCC 29328 / DSM 20472 / WAL 2508) (Peptostreptococcus magnus)).